A 319-amino-acid chain; its full sequence is Beta-ketoacyl-[acyl-carrier-protein] synthase III (319 aa).

Residues Cys-115 and His-246 contribute to the active site. Residues 247–251 (QANLR) are ACP-binding. Asn-276 is a catalytic residue.

The protein belongs to the thiolase-like superfamily. FabH family. In terms of assembly, homodimer.

The protein resides in the cytoplasm. It catalyses the reaction malonyl-[ACP] + acetyl-CoA + H(+) = 3-oxobutanoyl-[ACP] + CO2 + CoA. The protein operates within lipid metabolism; fatty acid biosynthesis. Its function is as follows. Catalyzes the condensation reaction of fatty acid synthesis by the addition to an acyl acceptor of two carbons from malonyl-ACP. Catalyzes the first condensation reaction which initiates fatty acid synthesis and may therefore play a role in governing the total rate of fatty acid production. Possesses both acetoacetyl-ACP synthase and acetyl transacylase activities. Its substrate specificity determines the biosynthesis of branched-chain and/or straight-chain of fatty acids. This is Beta-ketoacyl-[acyl-carrier-protein] synthase III from Coxiella burnetii (strain Dugway 5J108-111).